The sequence spans 340 residues: Glutamine synthetase (340 aa).

Positions 3 to 82 (IKAEYIWIDG…LCEVLHTDLT (80 aa)) constitute a GS beta-grasp domain. The region spanning 88–340 (TRALLRPVAE…CTELARREQI (253 aa)) is the GS catalytic domain. The Mg(2+) site is built by E109, E111, E171, and E178. L-glutamate is bound at residue E276.

This sequence belongs to the glutamine synthetase family. In terms of assembly, homooctamer and homotetramer. The cofactor is Mg(2+).

The protein resides in the cytoplasm. The enzyme catalyses L-glutamate + NH4(+) + ATP = L-glutamine + ADP + phosphate + H(+). Catalyzes the ATP-dependent biosynthesis of glutamine from glutamate and ammonia. This is Glutamine synthetase from Streptomyces hygroscopicus.